The chain runs to 311 residues: MVSTATQIAGFNFDNCLMNAAGVYCMSKEELLEIETSAAGSFVTKTGTLEAREGNPEPRYAPTPLGSINSMGLPNMGYDYYLDVVLDLEKEENSKNHFISVVGLSPEDTHTILKTLHSSAYQGLVELNLSCPNVPGKPQIAYDFETTEQLLTEIFSYYTKPLGVKLPPYFDIVHFDQAAAIFNKFPLAFVNSVNSIGNGLVIDDETVIIKPKNGFGGIGGDYIKPTALANVHAFYQRLNPSIQIIGTGGVKSGRDAFEHILCGASMVQIGTALQEEGPEIFTRITEELKQIMVEKGYQRLDDFRGKLHYLD.

Substrate-binding positions include lysine 45, 69–73 (NSMGL), and asparagine 128. 45–46 (KT) contributes to the FMN binding site. Asparagine 128 provides a ligand contact to FMN. Cysteine 131 acts as the Nucleophile in catalysis. 2 residues coordinate FMN: lysine 165 and valine 193. 194–195 (NS) provides a ligand contact to substrate. FMN contacts are provided by residues glycine 220, 248–249 (GG), and 270–271 (GT).

The protein belongs to the dihydroorotate dehydrogenase family. Type 1 subfamily. In terms of assembly, homodimer. The cofactor is FMN.

The protein resides in the cytoplasm. It catalyses the reaction (S)-dihydroorotate + fumarate = orotate + succinate. Its pathway is pyrimidine metabolism; UMP biosynthesis via de novo pathway. In terms of biological role, catalyzes the conversion of dihydroorotate to orotate with fumarate as the electron acceptor. The sequence is that of Putative dihydroorotate dehydrogenase A (fumarate) (pyrD) from Streptococcus uberis (strain ATCC BAA-854 / 0140J).